A 140-amino-acid polypeptide reads, in one-letter code: Pre-mRNA-splicing factor NTC20 (140 aa).

Residue serine 139 is modified to Phosphoserine.

As to quaternary structure, belongs to the NTC complex (or PRP19-associated complex), composed of at least CEF1, CLF1, ISY1, NTC20, SNT309, SYF1, SYF2, and PRP19. The NTC complex associates with the spliceosome after the release of the U1 and U4 snRNAs and forms the CWC spliceosome subcomplex (or CEF1-associated complex) reminiscent of a late-stage spliceosome composed also of the U2, U5 and U6 snRNAs and at least BUD13, BRR2, CDC40, CUS1, CWC2, CWC15, CWC21, CWC22, CWC23, CWC24, CWC25, CWC27, ECM2, HSH155, IST3, LEA1, MSL1, PRP8, PRP9, PRP11, PRP21, PRP22, PRP45, PRP46, SLU7, SMB1, SMD1, SMD2, SMD3, SMX2, SMX3, SNU114, SPP2, RSE1 and YJU2. Interacts with CEF1, CLF1, ISY1, PRP46, and SYF1.

The protein localises to the nucleus. Functionally, involved in pre-mRNA splicing. As a component of the NTC complex, associates to the spliceosome to mediate conformational rearrangement or to stabilize the structure of the spliceosome after U4 snRNA dissociation, which leads to spliceosome maturation. The chain is Pre-mRNA-splicing factor NTC20 (NTC20) from Saccharomyces cerevisiae (strain ATCC 204508 / S288c) (Baker's yeast).